The chain runs to 809 residues: LPS-assembly protein LptD (809 aa).

The N-terminal stretch at 1 to 22 is a signal peptide; sequence MRRALRLLPLPLSIAICLPAMA.

This sequence belongs to the LptD family. In terms of assembly, component of the lipopolysaccharide transport and assembly complex. Interacts with LptE and LptA.

The protein localises to the cell outer membrane. Functionally, together with LptE, is involved in the assembly of lipopolysaccharide (LPS) at the surface of the outer membrane. This chain is LPS-assembly protein LptD, found in Xanthomonas campestris pv. campestris (strain 8004).